Here is a 250-residue protein sequence, read N- to C-terminus: Non-specific acid phosphatase (250 aa).

Residues 1-20 (MKSRYLLFFLPLIVAKYTSA) form the signal peptide.

This sequence belongs to the class A bacterial acid phosphatase family. In terms of assembly, homodimer.

The protein resides in the periplasm. It carries out the reaction a phosphate monoester + H2O = an alcohol + phosphate. The polypeptide is Non-specific acid phosphatase (phoN) (Salmonella typhi).